We begin with the raw amino-acid sequence, 387 residues long: GTPase Obg (387 aa).

The Obg domain occupies 1-159 (MKFVDEVEIR…RSLKLELLLL (159 aa)). The 174-residue stretch at 160–333 (ADVGLLGLPN…LTQKVMTFIE (174 aa)) folds into the OBG-type G domain. GTP-binding positions include 166 to 173 (GLPNAGKS), 191 to 195 (FTTLV), 213 to 216 (DIPG), 283 to 286 (NKLD), and 314 to 316 (SAF). Residues Ser173 and Thr193 each contribute to the Mg(2+) site. A disordered region spans residues 361–387 (AAHSQDDDLDDDDWDEDDYDVEVEYRQ). Residues 367-387 (DDLDDDDWDEDDYDVEVEYRQ) are compositionally biased toward acidic residues.

This sequence belongs to the TRAFAC class OBG-HflX-like GTPase superfamily. OBG GTPase family. Monomer. Mg(2+) serves as cofactor.

It is found in the cytoplasm. An essential GTPase which binds GTP, GDP and possibly (p)ppGpp with moderate affinity, with high nucleotide exchange rates and a fairly low GTP hydrolysis rate. Plays a role in control of the cell cycle, stress response, ribosome biogenesis and in those bacteria that undergo differentiation, in morphogenesis control. This is GTPase Obg from Colwellia psychrerythraea (strain 34H / ATCC BAA-681) (Vibrio psychroerythus).